The following is a 459-amino-acid chain: Protein ABHD15 (459 aa).

The signal sequence occupies residues 1 to 28 (MPPWAAALALLLAALALLLLRPWKRAVG). Catalysis depends on charge relay system residues Asp351 and His382. Ser425 bears the Phosphoserine mark.

The protein belongs to the AB hydrolase superfamily. AB hydrolase 4 family. As to quaternary structure, interacts with PDE3B; this interaction regulates PDE3B's stability and expression and, thereby, impacts the antilipolytic action of insulin. As to expression, mainly expressed in adipocytes and adipose depots, followed by a weak expression in liver and pancreas. In white adipose tissue (WAT), only expressed in mature adipocytes and primary adipocytes differentiated from stromal vascular cells (SVCs), but not in undifferentiated SVCs.

Its subcellular location is the secreted. Its function is as follows. May regulate adipocyte lipolysis and liver lipid accumulation. The protein is Protein ABHD15 of Mus musculus (Mouse).